The following is a 122-amino-acid chain: MKVFIILGALNAMMAVGTGAFGAHGLEGKLSDKYMSIWEKATTYQMYHGLGLLVIGLISGTTSINVNWAGWLLFFGIVFFSGSLYFLALTQVRILGAITPIGGVLFIIGWLVLVIATLKFAG.

A run of 4 helical transmembrane segments spans residues 3–23, 46–66, 69–89, and 98–118; these read VFII…AFGA, MYHG…SINV, AGWL…FLAL, and ITPI…IATL.

It belongs to the UPF0382 family.

Its subcellular location is the cell membrane. This Staphylococcus epidermidis (strain ATCC 35984 / DSM 28319 / BCRC 17069 / CCUG 31568 / BM 3577 / RP62A) protein is UPF0382 membrane protein SERP0230.